Reading from the N-terminus, the 153-residue chain is Large ribosomal subunit protein uL15 (153 aa).

The tract at residues 1–49 is disordered; the sequence is MQLHNLYPFPEERKTRRRVGRGSGSGLGCTAGKGHKGQNARAGGGVAPG. Residues 21–31 show a composition bias toward gly residues; the sequence is RGSGSGLGCTA.

The protein belongs to the universal ribosomal protein uL15 family. In terms of assembly, part of the 50S ribosomal subunit.

Its function is as follows. Binds to the 23S rRNA. The protein is Large ribosomal subunit protein uL15 of Desulfovibrio desulfuricans (strain ATCC 27774 / DSM 6949 / MB).